The primary structure comprises 228 residues: 5'-methylthioadenosine/S-adenosylhomocysteine nucleosidase (228 aa).

E11 (proton acceptor) is an active-site residue. Substrate is bound by residues G77, I151, and 172–173 (ME). D196 acts as the Proton donor in catalysis.

Belongs to the PNP/UDP phosphorylase family. MtnN subfamily.

It catalyses the reaction S-adenosyl-L-homocysteine + H2O = S-(5-deoxy-D-ribos-5-yl)-L-homocysteine + adenine. The enzyme catalyses S-methyl-5'-thioadenosine + H2O = 5-(methylsulfanyl)-D-ribose + adenine. It carries out the reaction 5'-deoxyadenosine + H2O = 5-deoxy-D-ribose + adenine. The protein operates within amino-acid biosynthesis; L-methionine biosynthesis via salvage pathway; S-methyl-5-thio-alpha-D-ribose 1-phosphate from S-methyl-5'-thioadenosine (hydrolase route): step 1/2. Its function is as follows. Catalyzes the irreversible cleavage of the glycosidic bond in both 5'-methylthioadenosine (MTA) and S-adenosylhomocysteine (SAH/AdoHcy) to adenine and the corresponding thioribose, 5'-methylthioribose and S-ribosylhomocysteine, respectively. Also cleaves 5'-deoxyadenosine, a toxic by-product of radical S-adenosylmethionine (SAM) enzymes, into 5-deoxyribose and adenine. The polypeptide is 5'-methylthioadenosine/S-adenosylhomocysteine nucleosidase (Staphylococcus epidermidis (strain ATCC 12228 / FDA PCI 1200)).